A 181-amino-acid polypeptide reads, in one-letter code: Oleosin (181 aa).

A disordered region spans residues 1–28; sequence TTTTYDRHFTTTQPHYRQDDRSRYDQQT. Residues 1–38 form a polar region; the sequence is TTTTYDRHFTTTQPHYRQDDRSRYDQQTHSQSTSRTLA. Over residues 16–26 the composition is skewed to basic and acidic residues; it reads YRQDDRSRYDQ. The next 3 membrane-spanning stretches (helical) occupy residues 38 to 58, 69 to 89, and 90 to 110; these read AIIALLPVGGILLGLAALTFI, PLFVIFSPIIVPAVLTIGLAV, and TGFLASGTFGLTGLSSLSYLF. The tract at residues 39 to 110 is hydrophobic; that stretch reads IIALLPVGGI…TGLSSLSYLF (72 aa). The tract at residues 155–181 is disordered; that stretch reads EMGDQGQVGVHAQVGGGKEGRKSGDRT. A compositionally biased stretch (low complexity) spans 158–167; it reads DQGQVGVHAQ. The segment covering 172 to 181 has biased composition (basic and acidic residues); sequence KEGRKSGDRT.

Belongs to the oleosin family.

The protein resides in the lipid droplet. It localises to the membrane. May have a structural role to stabilize the lipid body during desiccation of the seed by preventing coalescence of the oil. Probably interacts with both lipid and phospholipid moieties of lipid bodies. May also provide recognition signals for specific lipase anchorage in lipolysis during seedling growth. This Helianthus annuus (Common sunflower) protein is Oleosin.